The sequence spans 435 residues: Glutamate-1-semialdehyde 2,1-aminomutase (435 aa).

Lysine 266 is subject to N6-(pyridoxal phosphate)lysine.

It belongs to the class-III pyridoxal-phosphate-dependent aminotransferase family. HemL subfamily. As to quaternary structure, homodimer. Requires pyridoxal 5'-phosphate as cofactor.

It is found in the cytoplasm. The catalysed reaction is (S)-4-amino-5-oxopentanoate = 5-aminolevulinate. It participates in porphyrin-containing compound metabolism; protoporphyrin-IX biosynthesis; 5-aminolevulinate from L-glutamyl-tRNA(Glu): step 2/2. The protein is Glutamate-1-semialdehyde 2,1-aminomutase of Coxiella burnetii (strain RSA 331 / Henzerling II).